Here is a 204-residue protein sequence, read N- to C-terminus: Urease accessory protein UreG (204 aa).

11 to 18 (GPVGAGKT) is a GTP binding site.

It belongs to the SIMIBI class G3E GTPase family. UreG subfamily. Homodimer. UreD, UreF and UreG form a complex that acts as a GTP-hydrolysis-dependent molecular chaperone, activating the urease apoprotein by helping to assemble the nickel containing metallocenter of UreC. The UreE protein probably delivers the nickel.

Its subcellular location is the cytoplasm. Functionally, facilitates the functional incorporation of the urease nickel metallocenter. This process requires GTP hydrolysis, probably effectuated by UreG. This is Urease accessory protein UreG from Staphylococcus epidermidis (strain ATCC 35984 / DSM 28319 / BCRC 17069 / CCUG 31568 / BM 3577 / RP62A).